A 431-amino-acid polypeptide reads, in one-letter code: D-inositol 3-phosphate glycosyltransferase (431 aa).

His-21 contributes to the 1D-myo-inositol 3-phosphate binding site. Residues 27–28 and Gly-35 contribute to the UDP-N-acetyl-alpha-D-glucosamine site; that span reads QP. 1D-myo-inositol 3-phosphate-binding positions include 32 to 37, Arg-90, Tyr-123, Thr-147, and Arg-167; that span reads DAGGMN. UDP-N-acetyl-alpha-D-glucosamine is bound by residues Arg-241, Lys-246, and Gln-307. Mg(2+) contacts are provided by Tyr-316, Arg-317, and Ala-319. UDP-N-acetyl-alpha-D-glucosamine-binding residues include Glu-329 and Glu-337. Thr-343 serves as a coordination point for Mg(2+).

This sequence belongs to the glycosyltransferase group 1 family. MshA subfamily. Homodimer.

It carries out the reaction 1D-myo-inositol 3-phosphate + UDP-N-acetyl-alpha-D-glucosamine = 1D-myo-inositol 2-acetamido-2-deoxy-alpha-D-glucopyranoside 3-phosphate + UDP + H(+). Functionally, catalyzes the transfer of a N-acetyl-glucosamine moiety to 1D-myo-inositol 3-phosphate to produce 1D-myo-inositol 2-acetamido-2-deoxy-glucopyranoside 3-phosphate in the mycothiol biosynthesis pathway. The sequence is that of D-inositol 3-phosphate glycosyltransferase from Saccharomonospora viridis (strain ATCC 15386 / DSM 43017 / JCM 3036 / CCUG 5913 / NBRC 12207 / NCIMB 9602 / P101) (Thermoactinomyces viridis).